The chain runs to 283 residues: uncharacterized protein (283 aa).

Asp-121 is an active-site residue.

The protein belongs to the pseudouridine synthase RluA family.

The catalysed reaction is a uridine in RNA = a pseudouridine in RNA. This is an uncharacterized protein from Bacillus subtilis (strain 168).